A 106-amino-acid polypeptide reads, in one-letter code: CLAVATA3/ESR (CLE)-related protein 21 (106 aa).

An N-terminal signal peptide occupies residues 1-31 (MLILSSRYAMKRDVLIIVIFTVLVLIIISRS). N-linked (GlcNAc...) asparagine glycosylation is present at asparagine 47. A compositionally biased stretch (basic residues) spans 72–82 (KVRRRSSRFRR). The tract at residues 72–106 (KVRRRSSRFRRKTDGDEEEEEKRSIPTGPNPLHNK) is disordered. 2 positions are modified to hydroxyproline: proline 97 and proline 100. A glycan (O-linked (Ara...) hydroxyproline) is linked at proline 100.

It belongs to the CLV3/ESR signal peptide family. The O-glycosylation (arabinosylation) of the hydroxyproline Pro-100 enhances binding affinity of the CLE21p peptide for its receptor. As to expression, mostly expressed in leaves and apex, and, to a lower extent, in seedlings, flowers, stems and siliques.

Its subcellular location is the secreted. The protein localises to the extracellular space. Functionally, extracellular signal peptide that regulates cell fate. Represses root apical meristem maintenance. Regulates the transition of protophloem cells from proliferation to differentiation, thus impinging on postembryonic growth capacity of the root meristem; this signaling pathway requires CRN and CLV2. This is CLAVATA3/ESR (CLE)-related protein 21 from Arabidopsis thaliana (Mouse-ear cress).